The chain runs to 898 residues: Transportin-1 (898 aa).

HEAT repeat units lie at residues 19–46, 51–89, 98–131, 137–174, 181–211, 224–251, 263–290, 306–397, 405–433, 445–472, 486–519, 527–560, 568–606, 614–665, 676–707, 715–748, 756–791, 799–832, 841–872, and 875–895; these read GLQQILQLLKESQSPDTTIQRTVQQKLE, YPDFNNYLIFVLTKLKSEDEPTRSLSGLILKNNVKAHFQ, FIKSECLNNIGDSSPLIRATVGILITTIASKGEL, LLPKLCSLLDSEDYNTCEGAFGALQKICEDSAEILDSD, NIMIPKFLQFFKHSSPKIRSHAVACVNQFII, FIENLFALAGDEEAEVRKNVCRALVMLL, HNIVEYMLQRTQDQDENVALEACEFWLT, PKLI…LANV, HILPLLKELLFHHEWVVKESGILVLGAIA, PELIPHLIQCLSDKKALVRSITCWTLSR, LKPLMTELLKRILDSNKRVQEAACSAFATLEEEA, LAYILDTLVFAFSKYQHKNLLILYDAIGTLADSV, EYIQMLMPPLIQKWNMLKDEDKDLFPLLECLSSVATALQ, EPVY…GLGG, ILTLMYQCMQDKMPEVRQSSFALLGDLTKACF, ADFMPILGTNLNPEFISVCNNATWAIGEISIQMG, PMVLHQLVEIINRPNTPKTLLENTAITIGRLGYVCP, QQFIRPWCTSLRNIRDNEEKDSAFRGICTMISVN, IFFCDAVASWINPKDDLRDMFCKILHGFKNQV, and ENWRRFSDQFPLPLKERLAAF. In terms of domain architecture, Importin N-terminal spans 41–109; the sequence is VQQKLEQLNQ…KSECLNNIGD (69 aa). The disordered stretch occupies residues 347–374; it reads FHRSRTVAQQHEEDGIEEEDDDDDEIDD. Over residues 360–374 the composition is skewed to acidic residues; that stretch reads DGIEEEDDDDDEIDD.

This sequence belongs to the importin beta family. Importin beta-2 subfamily. As to quaternary structure, identified in a complex that contains TNPO1, RAN and RANBP1. Binds HNRPA1, HNRPA2, HNRNPDL, RPS7, RPL5 and RAN. Interacts with H2A, H2B, H3 and H4 histones. Interacts with isoform 1 and isoform 5 of ADAR/ADAR1 (via DRBM 3 domain). Interacts with SNAI1 (via zinc fingers); the interaction mediates SNAI1 nuclear import. Interacts with SNAI2 (via zinc fingers). Interacts with RPL23A (via BIB domain) and SRP19; this interaction is involved in RPL23A and SRP19 import into the nucleus. Interacts (via HEAT repeats 8-12) with BAP1 (via non-classical PY-NLS); this interaction is direct, is involved in BAP1 nuclear import and disrupts BAP1 homodimerization.

The protein resides in the cytoplasm. The protein localises to the nucleus. In terms of biological role, functions in nuclear protein import as nuclear transport receptor. Serves as receptor for nuclear localization signals (NLS) in cargo substrates. May mediate docking of the importin/substrate complex to the nuclear pore complex (NPC) through binding to nucleoporin and the complex is subsequently translocated through the pore by an energy requiring, Ran-dependent mechanism. At the nucleoplasmic side of the NPC, Ran binds to the importin, the importin/substrate complex dissociates and importin is re-exported from the nucleus to the cytoplasm where GTP hydrolysis releases Ran. The directionality of nuclear import is thought to be conferred by an asymmetric distribution of the GTP- and GDP-bound forms of Ran between the cytoplasm and nucleus. Involved in nuclear import of M9-containing proteins. In vitro, binds directly to the M9 region of the heterogeneous nuclear ribonucleoproteins (hnRNP), A1 and A2 and mediates their nuclear import. Involved in hnRNP A1/A2 nuclear export. Mediates the nuclear import of ribosomal proteins RPL23A, RPS7 and RPL5. In vitro, mediates nuclear import of SRP19. Mediates the import of histones H2A, H2B, H3 and H4. Mediates nuclear import of ADAR/ADAR1 in a RanGTP-dependent manner. Main mediator of PR-DUB complex component BAP1 nuclear import; acts redundantly with the karyopherins KPNA1 and KPNA2. The chain is Transportin-1 (Tnpo1) from Mus musculus (Mouse).